Reading from the N-terminus, the 332-residue chain is Lipoyl synthase (332 aa).

Cys55, Cys60, Cys66, Cys81, Cys85, Cys88, and Ser292 together coordinate [4Fe-4S] cluster. Residues Trp67–Leu281 form the Radical SAM core domain.

Belongs to the radical SAM superfamily. Lipoyl synthase family. The cofactor is [4Fe-4S] cluster.

Its subcellular location is the cytoplasm. It catalyses the reaction [[Fe-S] cluster scaffold protein carrying a second [4Fe-4S](2+) cluster] + N(6)-octanoyl-L-lysyl-[protein] + 2 oxidized [2Fe-2S]-[ferredoxin] + 2 S-adenosyl-L-methionine + 4 H(+) = [[Fe-S] cluster scaffold protein] + N(6)-[(R)-dihydrolipoyl]-L-lysyl-[protein] + 4 Fe(3+) + 2 hydrogen sulfide + 2 5'-deoxyadenosine + 2 L-methionine + 2 reduced [2Fe-2S]-[ferredoxin]. It functions in the pathway protein modification; protein lipoylation via endogenous pathway; protein N(6)-(lipoyl)lysine from octanoyl-[acyl-carrier-protein]: step 2/2. Functionally, catalyzes the radical-mediated insertion of two sulfur atoms into the C-6 and C-8 positions of the octanoyl moiety bound to the lipoyl domains of lipoate-dependent enzymes, thereby converting the octanoylated domains into lipoylated derivatives. This Beutenbergia cavernae (strain ATCC BAA-8 / DSM 12333 / CCUG 43141 / JCM 11478 / NBRC 16432 / NCIMB 13614 / HKI 0122) protein is Lipoyl synthase.